Here is a 362-residue protein sequence, read N- to C-terminus: tRNA 2-selenouridine synthase (362 aa).

The Rhodanese domain maps to 14 to 137; the sequence is LANETPIIDV…LRQATIEMTN (124 aa). Cys97 serves as the catalytic S-selanylcysteine intermediate.

Belongs to the SelU family. In terms of assembly, monomer.

It carries out the reaction 5-methylaminomethyl-2-thiouridine(34) in tRNA + selenophosphate + (2E)-geranyl diphosphate + H2O + H(+) = 5-methylaminomethyl-2-selenouridine(34) in tRNA + (2E)-thiogeraniol + phosphate + diphosphate. The catalysed reaction is 5-methylaminomethyl-2-thiouridine(34) in tRNA + (2E)-geranyl diphosphate = 5-methylaminomethyl-S-(2E)-geranyl-thiouridine(34) in tRNA + diphosphate. It catalyses the reaction 5-methylaminomethyl-S-(2E)-geranyl-thiouridine(34) in tRNA + selenophosphate + H(+) = 5-methylaminomethyl-2-(Se-phospho)selenouridine(34) in tRNA + (2E)-thiogeraniol. The enzyme catalyses 5-methylaminomethyl-2-(Se-phospho)selenouridine(34) in tRNA + H2O = 5-methylaminomethyl-2-selenouridine(34) in tRNA + phosphate. In terms of biological role, involved in the post-transcriptional modification of the uridine at the wobble position (U34) of tRNA(Lys), tRNA(Glu) and tRNA(Gln). Catalyzes the conversion of 2-thiouridine (S2U-RNA) to 2-selenouridine (Se2U-RNA). Acts in a two-step process involving geranylation of 2-thiouridine (S2U) to S-geranyl-2-thiouridine (geS2U) and subsequent selenation of the latter derivative to 2-selenouridine (Se2U) in the tRNA chain. The protein is tRNA 2-selenouridine synthase of Proteus mirabilis (strain HI4320).